The following is a 232-amino-acid chain: Large ribosomal subunit protein uL3 (232 aa).

This sequence belongs to the universal ribosomal protein uL3 family. Part of the 50S ribosomal subunit. Forms a cluster with proteins L14 and L19.

Its function is as follows. One of the primary rRNA binding proteins, it binds directly near the 3'-end of the 23S rRNA, where it nucleates assembly of the 50S subunit. This Sorangium cellulosum (strain So ce56) (Polyangium cellulosum (strain So ce56)) protein is Large ribosomal subunit protein uL3.